We begin with the raw amino-acid sequence, 55 residues long: Riparin-1.5 acid (55 aa).

An N-terminal signal peptide occupies residues 1 to 15; the sequence is MKIIVFLAVLMLVSA. The propeptide occupies 16–41; that stretch reads QVCLVSAAEMEHSSDNELSSRDLVKR. Residues Cys-47 and Cys-53 are joined by a disulfide bond. The propeptide occupies 54–55; the sequence is NH.

In terms of tissue distribution, expressed by the skin glands.

Its subcellular location is the secreted. This is Riparin-1.5 acid from Crinia riparia (Streambank froglet).